Here is a 699-residue protein sequence, read N- to C-terminus: Elongation factor G (699 aa).

A tr-type G domain is found at 8 to 288 (EDYRNFGIMA…AVVDYLPSPV (281 aa)). GTP contacts are provided by residues 17 to 24 (AHIDAGKT), 86 to 90 (DTPGH), and 140 to 143 (NKMD).

The protein belongs to the TRAFAC class translation factor GTPase superfamily. Classic translation factor GTPase family. EF-G/EF-2 subfamily.

It is found in the cytoplasm. In terms of biological role, catalyzes the GTP-dependent ribosomal translocation step during translation elongation. During this step, the ribosome changes from the pre-translocational (PRE) to the post-translocational (POST) state as the newly formed A-site-bound peptidyl-tRNA and P-site-bound deacylated tRNA move to the P and E sites, respectively. Catalyzes the coordinated movement of the two tRNA molecules, the mRNA and conformational changes in the ribosome. The chain is Elongation factor G from Sinorhizobium medicae (strain WSM419) (Ensifer medicae).